We begin with the raw amino-acid sequence, 362 residues long: Prostaglandin E2 receptor EP2 subtype (362 aa).

Over 1–24 the chain is Extracellular; the sequence is MDNFLNDSKLMEDCKSRQWLLSGE. Asparagine 6 is a glycosylation site (N-linked (GlcNAc...) asparagine). The chain crosses the membrane as a helical span at residues 25–48; it reads SPAISSVMFSAGVLGNLIALALLA. The Cytoplasmic segment spans residues 49–66; that stretch reads RRWRGDTGCSAGSRTSIS. Residues 67 to 92 form a helical membrane-spanning segment; that stretch reads LFHVLVTELVLTDLLGTCLISPVVLA. Over 93-112 the chain is Extracellular; the sequence is SYSRNQTLVALAPESHACTY. Residues cysteine 110 and cysteine 188 are joined by a disulfide bond. Residues 113 to 133 traverse the membrane as a helical segment; it reads FAFTMTFFSLATMLMLFAMAL. Topologically, residues 134 to 152 are cytoplasmic; it reads ERYLSIGYPYFYRRHLSRR. A helical membrane pass occupies residues 153–177; sequence GGLAVLPVIYGASLLFCSLPLLNYG. At 178-199 the chain is on the extracellular side; that stretch reads EYVQYCPGTWCFIRHGRTAYLQ. Residues 200-224 traverse the membrane as a helical segment; the sequence is LYATMLLLLIVAVLACNISVILNLI. Residues 225–262 are Cytoplasmic-facing; that stretch reads RMHRRSRRSRCGLSGSSLRGPGSRRRGERTSMAEETDH. Residues 234–255 are disordered; sequence RCGLSGSSLRGPGSRRRGERTS. A compositionally biased stretch (low complexity) spans 235–245; it reads CGLSGSSLRGP. The helical transmembrane segment at 263 to 286 threads the bilayer; the sequence is LILLAIMTITFAICSLPFTIFAYM. Topologically, residues 287–299 are extracellular; it reads DETSSLKEKWDLR. The helical transmembrane segment at 300 to 323 threads the bilayer; the sequence is ALRFLSVNSIIDPWVFAILRPPVL. Residues 324-362 are Cytoplasmic-facing; that stretch reads RLMRSVLCCRTSLRTQEAQQTSCSTQSSASKQTDLCGQL.

It belongs to the G-protein coupled receptor 1 family.

It localises to the cell membrane. Its function is as follows. Receptor for prostaglandin E2 (PGE2). The activity of this receptor is mediated by G(s) proteins that stimulate adenylate cyclase. The subsequent raise in intracellular cAMP is responsible for the relaxing effect of this receptor on smooth muscle. This is Prostaglandin E2 receptor EP2 subtype (Ptger2) from Mus musculus (Mouse).